The following is a 92-amino-acid chain: Small ribosomal subunit protein uS19c (92 aa).

This sequence belongs to the universal ribosomal protein uS19 family.

The protein resides in the plastid. Functionally, protein S19 forms a complex with S13 that binds strongly to the 16S ribosomal RNA. The protein is Small ribosomal subunit protein uS19c of Cuscuta gronovii (Common dodder).